Consider the following 504-residue polypeptide: Tyrosine-protein phosphatase non-receptor type substrate 1 (504 aa).

The signal sequence occupies residues 1–30 (MEPAGPAPGRLGPLLCLLLAASCAWSGVAG). The Extracellular segment spans residues 31–373 (EEELQVIQPD…NTGSNERNIY (343 aa)). One can recognise an Ig-like V-type domain in the interval 32–137 (EELQVIQPDK…SPDDVEFKSG (106 aa)). 2 disulfides stabilise this stretch: Cys55/Cys121 and Cys170/Cys228. Ig-like C1-type domains lie at 148 to 247 (PSAP…ANLS) and 254 to 348 (PTLE…HDLK). N-linked (GlcNAc...) asparagine glycosylation is found at Asn245, Asn270, Asn292, and Asn319. Cys273 and Cys331 are disulfide-bonded. Over residues 336 to 355 (DGQPAVSKSHDLKVSAHPKE) the composition is skewed to basic and acidic residues. The disordered stretch occupies residues 336–364 (DGQPAVSKSHDLKVSAHPKEQGSNTAAEN). The chain crosses the membrane as a helical span at residues 374–394 (IVVGVVCTLLVALLMAALYLV). Over 395–504 (RIRQKKAQGS…EYASVQVPRK (110 aa)) the chain is Cytoplasmic. Residues 402 to 504 (QGSTSSTRLH…EYASVQVPRK (103 aa)) are disordered. Over residues 409-421 (RLHEPEKNAREIT) the composition is skewed to basic and acidic residues. Tyr429 bears the Phosphotyrosine; by Tyr-kinases mark. Positions 429–432 (YADL) match the SH2-binding motif. The short motif at 439–444 (KPAPQA) is the SH3-binding element. Positions 446–467 (EPNNHTEYASIQTSPQPASEDT) are enriched in polar residues. Phosphotyrosine; by Tyr-kinases is present on residues Tyr453 and Tyr470. 3 consecutive short sequence motifs (SH2-binding) follow at residues 453 to 456 (YASI), 470 to 473 (YADL), and 496 to 499 (YASV). Tyr496 is modified (phosphotyrosine).

Binds PTPN11 when tyrosine-phosphorylated, except in macrophages, where it primarily binds PTPN6. Binds GRB2 in vitro. Binds FGR. Binds JAK2 irrespective of its phosphorylation status and forms a stable complex. Binds SCAP1 and/or SCAP2. The resulting complex recruits FYB1. Binds PTK2B. Interacts with TRIM2. Post-translationally, N-glycosylated. In terms of processing, phosphorylated on tyrosine residues in response to stimulation with EGF, growth hormone, insulin and PDGF. Dephosphorylated by PTPN11. As to expression, ubiquitous. Highly expressed in brain. Detected on myeloid cells, but not T-cells. Detected at lower levels in heart, placenta, lung, testis, ovary, colon, liver, small intestine, prostate, spleen, kidney, skeletal muscle and pancreas.

The protein resides in the membrane. Immunoglobulin-like cell surface receptor for CD47. Acts as docking protein and induces translocation of PTPN6, PTPN11 and other binding partners from the cytosol to the plasma membrane. Supports adhesion of cerebellar neurons, neurite outgrowth and glial cell attachment. May play a key role in intracellular signaling during synaptogenesis and in synaptic function. Involved in the negative regulation of receptor tyrosine kinase-coupled cellular responses induced by cell adhesion, growth factors or insulin. Mediates negative regulation of phagocytosis, mast cell activation and dendritic cell activation. CD47 binding prevents maturation of immature dendritic cells and inhibits cytokine production by mature dendritic cells. Plays a role in antiviral immunity and limits new world arenavirus infection by decreasing virus internalization. Receptor for THBS1. Interaction with THBS1 stimulates phosphorylation of SIRPA. In response to THBS1, involved in ROS signaling in non-phagocytic cells, stimulating NADPH oxidase-derived ROS production. The polypeptide is Tyrosine-protein phosphatase non-receptor type substrate 1 (SIRPA) (Homo sapiens (Human)).